The following is a 334-amino-acid chain: Hematopoietic SH2 domain-containing protein (334 aa).

Residues 34–125 (WFHGTISREA…PFGELLTQAC (92 aa)) form the SH2 domain. 2 disordered regions span residues 157–181 (EVQRSSCPPEEASERKPSTTTKGEF) and 254–280 (EDSCAATTSLQNPAEPQALRGREATFR). Positions 258–267 (AATTSLQNPA) are enriched in polar residues.

In terms of assembly, interacts with FES and TNK2. In terms of processing, may be phosphorylated by FES and ACK1. As to expression, predominantly expressed in spleen and thymus. Appears not to be expressed in heart, brain, liver, kidney, embryo, lung and ovary.

Its subcellular location is the cytoplasm. The protein localises to the mitochondrion. In terms of biological role, adapter protein involved in tyrosine kinase and CD28 signaling. May be a modulator of the apoptotic response through its ability to affect mitochondrial stability. The protein is Hematopoietic SH2 domain-containing protein (Hsh2d) of Mus musculus (Mouse).